Here is a 309-residue protein sequence, read N- to C-terminus: ESX-3 secretion system protein EccE3 (309 aa).

Helical transmembrane passes span 5–25 (IALA…QTTT) and 29–49 (VLGV…GMFL).

This sequence belongs to the EccE family. As to quaternary structure, part of the ESX-3 / type VII secretion system (T7SS), which is composed of cytosolic and membrane components. The ESX-3 membrane complex is composed of EccB3, EccC3, EccD3 and EccE3.

The protein localises to the cell inner membrane. Part of the ESX-3 specialized secretion system, which is required for siderophore-mediated iron acquisition and for the secretion of EsxH and EsxG. In Mycolicibacterium smegmatis (strain ATCC 700084 / mc(2)155) (Mycobacterium smegmatis), this protein is ESX-3 secretion system protein EccE3.